We begin with the raw amino-acid sequence, 238 residues long: 14-3-3 family protein artA (238 aa).

It belongs to the 14-3-3 family.

In terms of biological role, 14-3-3 family protein that plays a role in the morphological differentiation and secondary metabolism biosynthesis. Required for normal fungal morphogenesis in an environment-dependent manner, affecting the balance between production of conidiophores and the formation of sclerotia, resistant structures that are necessary for the dissemination and survival. Acts as a positive regulator of conidiation and a negative regulator of sclerotial production. Also regulates the production of secondary metabolites such as aflatoxin, but also the indole-tetramic acid mycotoxin cyclopiazonic acid (CPA) and ustiloxin, an inhibitor of microtubule assembly. In Aspergillus flavus (strain ATCC 200026 / FGSC A1120 / IAM 13836 / NRRL 3357 / JCM 12722 / SRRC 167), this protein is 14-3-3 family protein artA.